Reading from the N-terminus, the 284-residue chain is Small ribosomal subunit protein uS2 (284 aa).

This sequence belongs to the universal ribosomal protein uS2 family.

This is Small ribosomal subunit protein uS2 (rpsB) from Mycoplasma genitalium (strain ATCC 33530 / DSM 19775 / NCTC 10195 / G37) (Mycoplasmoides genitalium).